A 194-amino-acid chain; its full sequence is GTP cyclohydrolase 1 (194 aa).

C83, H86, and C155 together coordinate Zn(2+).

This sequence belongs to the GTP cyclohydrolase I family. Toroid-shaped homodecamer, composed of two pentamers of five dimers.

The catalysed reaction is GTP + H2O = 7,8-dihydroneopterin 3'-triphosphate + formate + H(+). Its pathway is cofactor biosynthesis; 7,8-dihydroneopterin triphosphate biosynthesis; 7,8-dihydroneopterin triphosphate from GTP: step 1/1. The protein is GTP cyclohydrolase 1 (folE) of Streptococcus pyogenes.